The following is a 200-amino-acid chain: Imidazoleglycerol-phosphate dehydratase (200 aa).

The protein belongs to the imidazoleglycerol-phosphate dehydratase family.

Its subcellular location is the cytoplasm. It catalyses the reaction D-erythro-1-(imidazol-4-yl)glycerol 3-phosphate = 3-(imidazol-4-yl)-2-oxopropyl phosphate + H2O. The protein operates within amino-acid biosynthesis; L-histidine biosynthesis; L-histidine from 5-phospho-alpha-D-ribose 1-diphosphate: step 6/9. The protein is Imidazoleglycerol-phosphate dehydratase of Renibacterium salmoninarum (strain ATCC 33209 / DSM 20767 / JCM 11484 / NBRC 15589 / NCIMB 2235).